Here is a 582-residue protein sequence, read N- to C-terminus: Aspartate--tRNA ligase (582 aa).

Glutamate 174 is a binding site for L-aspartate. Positions 198–201 (QITK) are aspartate. L-aspartate is bound at residue arginine 220. Residues 220–222 (RDE) and glutamine 229 contribute to the ATP site. Histidine 443 is a binding site for L-aspartate. Glutamate 477 contacts ATP. Arginine 484 provides a ligand contact to L-aspartate. 529–532 (GLDR) contacts ATP.

Belongs to the class-II aminoacyl-tRNA synthetase family. Type 1 subfamily. Homodimer.

Its subcellular location is the cytoplasm. It catalyses the reaction tRNA(Asp) + L-aspartate + ATP = L-aspartyl-tRNA(Asp) + AMP + diphosphate. Catalyzes the attachment of L-aspartate to tRNA(Asp) in a two-step reaction: L-aspartate is first activated by ATP to form Asp-AMP and then transferred to the acceptor end of tRNA(Asp). The chain is Aspartate--tRNA ligase from Streptococcus pyogenes serotype M6 (strain ATCC BAA-946 / MGAS10394).